The following is a 508-amino-acid chain: Maturase K (508 aa).

The protein belongs to the intron maturase 2 family. MatK subfamily.

The protein resides in the plastid. It localises to the chloroplast. Usually encoded in the trnK tRNA gene intron. Probably assists in splicing its own and other chloroplast group II introns. This chain is Maturase K, found in Ranunculus glacialis (Glacier buttercup).